The sequence spans 640 residues: Threonine--tRNA ligase (640 aa).

Residues 1–61 form the TGS domain; sequence MPIITLPDGS…ERDATLQIIT (61 aa). The tract at residues 242-533 is catalytic; the sequence is DHRRIGKQLD…LIEHYAGAFP (292 aa). Zn(2+)-binding residues include C333, H384, and H510.

This sequence belongs to the class-II aminoacyl-tRNA synthetase family. Homodimer. Requires Zn(2+) as cofactor.

The protein localises to the cytoplasm. The catalysed reaction is tRNA(Thr) + L-threonine + ATP = L-threonyl-tRNA(Thr) + AMP + diphosphate + H(+). Functionally, catalyzes the attachment of threonine to tRNA(Thr) in a two-step reaction: L-threonine is first activated by ATP to form Thr-AMP and then transferred to the acceptor end of tRNA(Thr). Also edits incorrectly charged L-seryl-tRNA(Thr). This Pseudomonas paraeruginosa (strain DSM 24068 / PA7) (Pseudomonas aeruginosa (strain PA7)) protein is Threonine--tRNA ligase.